Consider the following 89-residue polypeptide: Small ribosomal subunit protein uS15 (89 aa).

Belongs to the universal ribosomal protein uS15 family. Part of the 30S ribosomal subunit. Forms a bridge to the 50S subunit in the 70S ribosome, contacting the 23S rRNA.

Functionally, one of the primary rRNA binding proteins, it binds directly to 16S rRNA where it helps nucleate assembly of the platform of the 30S subunit by binding and bridging several RNA helices of the 16S rRNA. Its function is as follows. Forms an intersubunit bridge (bridge B4) with the 23S rRNA of the 50S subunit in the ribosome. This chain is Small ribosomal subunit protein uS15, found in Leifsonia xyli subsp. xyli (strain CTCB07).